The primary structure comprises 534 residues: Phosphoenolpyruvate carboxykinase (ATP) (534 aa).

3 residues coordinate substrate: R58, Y194, and K200. Residues K200, H219, and 235 to 243 (GLSGTGKTT) contribute to the ATP site. Positions 200 and 219 each coordinate Mn(2+). D256 contacts Mn(2+). ATP-binding residues include E284, R322, and T449. Position 322 (R322) interacts with substrate.

This sequence belongs to the phosphoenolpyruvate carboxykinase (ATP) family. It depends on Mn(2+) as a cofactor.

It localises to the cytoplasm. The catalysed reaction is oxaloacetate + ATP = phosphoenolpyruvate + ADP + CO2. The protein operates within carbohydrate biosynthesis; gluconeogenesis. Functionally, involved in the gluconeogenesis. Catalyzes the conversion of oxaloacetate (OAA) to phosphoenolpyruvate (PEP) through direct phosphoryl transfer between the nucleoside triphosphate and OAA. The chain is Phosphoenolpyruvate carboxykinase (ATP) from Novosphingobium aromaticivorans (strain ATCC 700278 / DSM 12444 / CCUG 56034 / CIP 105152 / NBRC 16084 / F199).